We begin with the raw amino-acid sequence, 167 residues long: Endoribonuclease YbeY (167 aa).

Zn(2+) contacts are provided by His131, His135, and His141.

Belongs to the endoribonuclease YbeY family. Requires Zn(2+) as cofactor.

The protein resides in the cytoplasm. In terms of biological role, single strand-specific metallo-endoribonuclease involved in late-stage 70S ribosome quality control and in maturation of the 3' terminus of the 16S rRNA. In Rickettsia rickettsii (strain Sheila Smith), this protein is Endoribonuclease YbeY.